Here is a 299-residue protein sequence, read N- to C-terminus: Probable lipid kinase YegS (299 aa).

The region spanning 2 to 133 is the DAGKc domain; it reads AEFPASLLIL…IDMAQVNKQT (132 aa). Residues Thr-40, 66-72, and Thr-95 contribute to the ATP site; that span reads GDGTINE. Leu-215, Asp-218, and Leu-220 together coordinate Mg(2+). Catalysis depends on Glu-271, which acts as the Proton acceptor.

The protein belongs to the diacylglycerol/lipid kinase family. YegS lipid kinase subfamily. The cofactor is Mg(2+). Ca(2+) serves as cofactor.

It is found in the cytoplasm. Functionally, probably phosphorylates lipids; the in vivo substrate is unknown. This Escherichia coli O17:K52:H18 (strain UMN026 / ExPEC) protein is Probable lipid kinase YegS.